We begin with the raw amino-acid sequence, 169 residues long: Disulfide bond formation protein B 1 (169 aa).

At 1–14 (MSEETIRLGRERRY) the chain is on the cytoplasmic side. Residues 15 to 31 (LVLLGIICLALIGGALY) form a helical membrane-spanning segment. At 32–49 (MQIVLGEAPCPLCILQRY) the chain is on the periplasmic side. Cys-41 and Cys-44 are joined by a disulfide. Residues 50-64 (ALLLIALFAFIGAAM) traverse the membrane as a helical segment. The Cytoplasmic segment spans residues 65-71 (RTRRSIT). A helical membrane pass occupies residues 72 to 89 (VFEVLVVICAIAGAGVAG). At 90-144 (HHVYTQFYPAVSCGIDVLQPIVDDLPLAKIFPLGFQVDGFCSTPYPPILGLSLAQ) the chain is on the periplasmic side. Cys-102 and Cys-130 are joined by a disulfide. A helical transmembrane segment spans residues 145-163 (WALVAFVLVVILVPLLTSR). The Cytoplasmic portion of the chain corresponds to 164–169 (NRKALR).

It belongs to the DsbB family.

The protein resides in the cell inner membrane. Its function is as follows. Required for disulfide bond formation in some periplasmic proteins. Acts by oxidizing the DsbA protein. This chain is Disulfide bond formation protein B 1, found in Pseudomonas fluorescens (strain Pf0-1).